The primary structure comprises 173 residues: Lens fiber membrane intrinsic protein (173 aa).

Topologically, residues 1–3 (MYS) are cytoplasmic. The helical transmembrane segment at 4–24 (FMGGGLFCAWVGTILLVVATA) threads the bilayer. The Extracellular portion of the chain corresponds to 25–66 (TDHWMQYRLSGSFAHQGLWRYCLGNKCFLQTESIAYWNATRA). 2 C-linked (Man) tryptophan glycosylation sites follow: Trp-43 and Trp-61. Asn-62 carries an N-linked (GlcNAc...) asparagine glycan. Residues 67 to 87 (FMILSALCATSGIIMGVLAFA) form a helical membrane-spanning segment. Topologically, residues 88–98 (QQSTFTRLSRP) are cytoplasmic. A helical transmembrane segment spans residues 99–119 (FSAGIMFFASTLFVLLALAIY). Residues 120 to 140 (TGVTVSFLGRRFGDWRFSWSY) lie on the Extracellular side of the membrane. Residues 141–161 (ILGWVALLMTFFAGIFYMCAY) form a helical membrane-spanning segment. Topologically, residues 162-173 (RMHECRRLSTPR) are cytoplasmic. Ser-170 bears the Phosphoserine mark. Thr-171 carries the post-translational modification Phosphothreonine.

It belongs to the PMP-22/EMP/MP20 family. In terms of assembly, seems to be associated with itself or another lens membrane component via disulfide bonds. Eye lens specific.

It is found in the membrane. Present in the thicker 16-17 nm junctions of mammalian lens fiber cells, where it may contribute to cell junctional organization. Acts as a receptor for calmodulin. May play an important role in both lens development and cataractogenesis. This Rattus norvegicus (Rat) protein is Lens fiber membrane intrinsic protein (Lim2).